A 354-amino-acid polypeptide reads, in one-letter code: 3-dehydroquinate synthase (354 aa).

NAD(+) is bound by residues 66–71 (DGERYK), 100–104 (GVVGD), 124–125 (TT), Lys137, and Lys146. The Zn(2+) site is built by Glu179, His242, and His259.

Belongs to the sugar phosphate cyclases superfamily. Dehydroquinate synthase family. Requires Co(2+) as cofactor. The cofactor is Zn(2+). NAD(+) is required as a cofactor.

The protein resides in the cytoplasm. The enzyme catalyses 7-phospho-2-dehydro-3-deoxy-D-arabino-heptonate = 3-dehydroquinate + phosphate. It participates in metabolic intermediate biosynthesis; chorismate biosynthesis; chorismate from D-erythrose 4-phosphate and phosphoenolpyruvate: step 2/7. Its function is as follows. Catalyzes the conversion of 3-deoxy-D-arabino-heptulosonate 7-phosphate (DAHP) to dehydroquinate (DHQ). This Halorhodospira halophila (strain DSM 244 / SL1) (Ectothiorhodospira halophila (strain DSM 244 / SL1)) protein is 3-dehydroquinate synthase.